Consider the following 315-residue polypeptide: Ankyrin repeat domain-containing protein 54 (315 aa).

The interval 1-49 (MDGSSPLLAAAGSDGDRSSSEGEYTLAGGPSAGDTEKREGESPMEAAGA) is disordered. 4 ANK repeats span residues 124-153 (HAVK…DPCA), 157-186 (KGRT…DPNQ), 190-219 (LGNT…RVDA), and 223-255 (AGRT…EVTQ).

Its subcellular location is the nucleus. The protein localises to the cytoplasm. It localises to the midbody. In terms of biological role, plays an important role in regulating intracellular signaling events associated with erythroid terminal differentiation. The chain is Ankyrin repeat domain-containing protein 54 (ankrd54) from Danio rerio (Zebrafish).